The chain runs to 217 residues: ATP phosphoribosyltransferase (217 aa).

Belongs to the ATP phosphoribosyltransferase family. Short subfamily. In terms of assembly, heteromultimer composed of HisG and HisZ subunits.

The protein resides in the cytoplasm. The catalysed reaction is 1-(5-phospho-beta-D-ribosyl)-ATP + diphosphate = 5-phospho-alpha-D-ribose 1-diphosphate + ATP. It functions in the pathway amino-acid biosynthesis; L-histidine biosynthesis; L-histidine from 5-phospho-alpha-D-ribose 1-diphosphate: step 1/9. Its function is as follows. Catalyzes the condensation of ATP and 5-phosphoribose 1-diphosphate to form N'-(5'-phosphoribosyl)-ATP (PR-ATP). Has a crucial role in the pathway because the rate of histidine biosynthesis seems to be controlled primarily by regulation of HisG enzymatic activity. This Burkholderia vietnamiensis (strain G4 / LMG 22486) (Burkholderia cepacia (strain R1808)) protein is ATP phosphoribosyltransferase.